A 96-amino-acid chain; its full sequence is U-stichotoxin-Hau2b (96 aa).

The signal sequence occupies residues 1–18 (MKPIFIVALLFSTCLVNA). Propeptides lie at residues 19 to 29 (KPSIDDAEMKR) and 30 to 33 (EPKP). Disulfide bonds link Cys-40-Cys-51 and Cys-43-Cys-58. Propeptides lie at residues 62 to 64 (RKR) and 65 to 68 (EPKP). Disulfide bonds link Cys-75–Cys-86 and Cys-78–Cys-93.

The protein belongs to the sea anemone BBH family.

It is found in the secreted. It localises to the nematocyst. Its function is as follows. Neurotoxin that paralyzes freshwater crabs at high concentration. This is U-stichotoxin-Hau2b from Heteractis aurora (Banded sea anemone).